Here is a 213-residue protein sequence, read N- to C-terminus: Orotate phosphoribosyltransferase (213 aa).

A 5-phospho-alpha-D-ribose 1-diphosphate-binding site is contributed by lysine 26. 34–35 contributes to the orotate binding site; it reads FF. 5-phospho-alpha-D-ribose 1-diphosphate is bound by residues 72 to 73, arginine 99, lysine 100, lysine 103, histidine 105, and 124 to 132; these read YK and DDVITAGTA. Positions 128 and 156 each coordinate orotate.

This sequence belongs to the purine/pyrimidine phosphoribosyltransferase family. PyrE subfamily. In terms of assembly, homodimer. Mg(2+) is required as a cofactor.

The enzyme catalyses orotidine 5'-phosphate + diphosphate = orotate + 5-phospho-alpha-D-ribose 1-diphosphate. Its pathway is pyrimidine metabolism; UMP biosynthesis via de novo pathway; UMP from orotate: step 1/2. Functionally, catalyzes the transfer of a ribosyl phosphate group from 5-phosphoribose 1-diphosphate to orotate, leading to the formation of orotidine monophosphate (OMP). In Escherichia coli O45:K1 (strain S88 / ExPEC), this protein is Orotate phosphoribosyltransferase.